A 24-amino-acid polypeptide reads, in one-letter code: Caerulein precursor fragment BM1 (24 aa).

In terms of tissue distribution, expressed by the skin glands.

The protein resides in the secreted. Its function is as follows. Antimicrobial peptide. This is Caerulein precursor fragment BM1 from Xenopus boumbaensis (Mawa clawed frog).